The primary structure comprises 256 residues: 5-oxoprolinase subunit A 3 (256 aa).

The protein belongs to the LamB/PxpA family. Forms a complex composed of PxpA, PxpB and PxpC.

The catalysed reaction is 5-oxo-L-proline + ATP + 2 H2O = L-glutamate + ADP + phosphate + H(+). Its function is as follows. Catalyzes the cleavage of 5-oxoproline to form L-glutamate coupled to the hydrolysis of ATP to ADP and inorganic phosphate. This is 5-oxoprolinase subunit A 3 from Pseudomonas syringae pv. tomato (strain ATCC BAA-871 / DC3000).